Consider the following 446-residue polypeptide: Mycosin-1 (446 aa).

The N-terminal stretch at Met-1–Ala-21 is a signal peptide. Positions Pro-24–Thr-43 are disordered. The Peptidase S8 domain maps to Pro-64–Leu-387. Active-site charge relay system residues include Asp-90, His-121, and Ser-332. Residues Ile-419–Ala-439 form a helical membrane-spanning segment.

This sequence belongs to the peptidase S8 family.

It localises to the cell membrane. In terms of biological role, may play a dual role in regulation of ESX-1 secretion and virulence. Acts as a protease that cleaves EspB. Essential for ESX-1 function, required for early replication in macrophages and full virulence in mice. This Mycobacterium tuberculosis (strain ATCC 25618 / H37Rv) protein is Mycosin-1.